The chain runs to 482 residues: MELIFEKSKKGRKGYKLPELDVEEVNIKEYLPEEYLREELDFPEVSELDVVRHYTNLSHLNYAVDTTMVPLGSCTMKYNPRINEELVNKKEFLNVHPLTPEEYIQPLLKLVYELKELLKELGGFAEVSLQPAAGAHGELLGLLLIHAYHQDRGNKEKKVVLIPDSAHGTNPASAAICGFDIKVVKSDKKGELDFEDFIKKLDERVAALMITNPNTLGIFERKIKEIAEELHKRDALLYMDGANFNALVGRFKPGEWGVDVMHFNLHKTFSTPHGGGGPGAGPVGVSERLKPYLPVPQIEYDGKKYYLNWNIEKSVGKILAFHGHFLVWLKALAYILTYGKDIKKVSEYAVLNARYLKHLLKGVFKDPYPESPCMHEFVLSATNLTKYGVRASDVAKRILDYGFYAPTMYFPLIVREALMIEPTETENPDTLKKFALILRKIVKEAKEKPEILKKAPHRTPVRRIKEAEANRNLILKFKDIKE.

An N6-(pyridoxal phosphate)lysine modification is found at Lys-267.

The protein belongs to the GcvP family. C-terminal subunit subfamily. In terms of assembly, the glycine cleavage system is composed of four proteins: P, T, L and H. In this organism, the P 'protein' is a heterodimer of two subunits. Pyridoxal 5'-phosphate serves as cofactor.

It catalyses the reaction N(6)-[(R)-lipoyl]-L-lysyl-[glycine-cleavage complex H protein] + glycine + H(+) = N(6)-[(R)-S(8)-aminomethyldihydrolipoyl]-L-lysyl-[glycine-cleavage complex H protein] + CO2. Functionally, the glycine cleavage system catalyzes the degradation of glycine. The P protein binds the alpha-amino group of glycine through its pyridoxal phosphate cofactor; CO(2) is released and the remaining methylamine moiety is then transferred to the lipoamide cofactor of the H protein. This chain is Probable glycine dehydrogenase (decarboxylating) subunit 2, found in Aquifex aeolicus (strain VF5).